Reading from the N-terminus, the 634-residue chain is Formate--tetrahydrofolate ligase (634 aa).

78 to 85 (TPLGEGKS) lines the ATP pocket.

It belongs to the formate--tetrahydrofolate ligase family. In terms of assembly, homodimer.

It carries out the reaction (6S)-5,6,7,8-tetrahydrofolate + formate + ATP = (6R)-10-formyltetrahydrofolate + ADP + phosphate. The protein operates within one-carbon metabolism; tetrahydrofolate interconversion. The chain is Formate--tetrahydrofolate ligase (THFS) from Arabidopsis thaliana (Mouse-ear cress).